The sequence spans 291 residues: Protease HtpX homolog (291 aa).

The next 2 helical transmembrane spans lie at 4–24 (IALF…VASL) and 38–58 (LGAL…ISLL). Histidine 144 is a binding site for Zn(2+). The active site involves glutamate 145. Residue histidine 148 participates in Zn(2+) binding. Transmembrane regions (helical) follow at residues 159-179 (LIQG…GYAV) and 199-219 (VTTI…VAWF). Glutamate 224 is a Zn(2+) binding site.

The protein belongs to the peptidase M48B family. Zn(2+) is required as a cofactor.

It is found in the cell inner membrane. In Paracidovorax citrulli (strain AAC00-1) (Acidovorax citrulli), this protein is Protease HtpX homolog.